Reading from the N-terminus, the 1044-residue chain is Diacylglycerol lipase-alpha (1044 aa).

Residues 1–22 (MPGIVVFRRRWSVGSDDLVLPA) are Cytoplasmic-facing. Residues 23-43 (IFLFLLHTTWFVILSVVLFGL) traverse the membrane as a helical segment. The Extracellular segment spans residues 44-60 (VYNPHEACSLNLVDHGR). The chain crosses the membrane as a helical span at residues 61-81 (GYLGILLSCMIAEMAIIWLSM). At 82–101 (RGGILYTEPRDSMQYVLYVR) the chain is on the cytoplasmic side. The helical transmembrane segment at 102–122 (LAILVIEFIYAIVGIVWLTQY) threads the bilayer. The Extracellular segment spans residues 123–136 (YTSCNDLTAKNVTL). Asn133 is a glycosylation site (N-linked (GlcNAc...) asparagine). A helical membrane pass occupies residues 137–157 (GMVVCNWVVILSVCITVLCVF). The Cytoplasmic segment spans residues 158–1044 (DPTGRTFVKL…KQDDLVISAR (887 aa)). Catalysis depends on charge relay system residues Ser472 and Asp524. 11 positions are modified to phosphoserine: Ser728, Ser730, Ser733, Ser744, Ser784, Ser786, Ser808, Ser810, Ser835, Ser849, and Ser954. Residues 848 to 905 (LSKHSQDTQPLEAALGSGGVTPERPPSAANDEEEAAGGSEGGGVAPRGELALHNGRLG) form a disordered region. The interval 1013-1044 (QECLATDKIRTSTPTGHGASPTKQDDLVISAR) is disordered. Residue Thr1025 is modified to Phosphothreonine.

Belongs to the AB hydrolase superfamily. Lipase family. Interacts (via C-terminal) with CAMK2A; leading to the phosphorylation and inhibition of DAGLA enzymatic activity. Interacts (via PPXXF motif) with HOMER1 and HOMER2; this interaction is required for DAGLA membrane localization. The cofactor is Ca(2+). Post-translationally, phosphorylated at Ser-784 and Ser-810 by CAMK2A; phosphorylation by CAMK2A inhibits diacylglycerol lipase activity.

The protein localises to the cell membrane. It is found in the cell projection. The protein resides in the dendritic spine membrane. Its subcellular location is the postsynaptic density membrane. It localises to the early endosome membrane. The catalysed reaction is a 1,2-diacyl-sn-glycerol + H2O = a 2-acylglycerol + a fatty acid + H(+). It catalyses the reaction 1-octadecanoyl-2-(5Z,8Z,11Z,14Z-eicosatetraenoyl)-sn-glycerol + H2O = 2-(5Z,8Z,11Z,14Z-eicosatetraenoyl)-glycerol + octadecanoate + H(+). It carries out the reaction 1,2-di-(9Z-octadecenoyl)-sn-glycerol + H2O = 2-(9Z-octadecenoyl)-glycerol + (9Z)-octadecenoate + H(+). The enzyme catalyses 1-(9Z-octadecenoyl)-2-(5Z,8Z,11Z,14Z-eicosatetraenoyl)-sn-glycerol + H2O = 2-(5Z,8Z,11Z,14Z-eicosatetraenoyl)-glycerol + (9Z)-octadecenoate + H(+). The catalysed reaction is 1-(9Z-octadecenoyl)-2-octadecanoyl-sn-glycerol + H2O = 2-octadecanoylglycerol + (9Z)-octadecenoate + H(+). It catalyses the reaction 1-(9Z-octadecenoyl)-2-(9Z,12Z-octadecadienoyl)-sn-glycerol + H2O = 2-(9Z,12Z-octadecadienoyl)-glycerol + (9Z)-octadecenoate + H(+). It carries out the reaction 1-(9Z-octadecenoyl)-2-O-(5Z,8Z,11Z,14Z-eicosatetraenyl)-sn-glycerol + H2O = 2-O-(5Z,8Z,11Z,14Z)-eicosatetraenylglycerol + (9Z)-octadecenoate + H(+). Its activity is regulated as follows. Inhibited by 1,2,3-triazole urea covalent inhibitors KT172, DH376 and DO34. Inhibited by p-hydroxy-mercuri-benzoate and HgCl(2), but not to PMSF. Also inhibited by RHC80267. Diacylglycerol lipase activity is inhibited by the phosphorylation of Ser-784 and Ser-810 by CAMK2A. Functionally, serine hydrolase that hydrolyzes arachidonic acid-esterified diacylglycerols (DAGs) to produce the principal endocannabinoid, 2-arachidonoylglycerol (2-AG). Preferentially hydrolyzes sn-1 fatty acids from diacylglycerols (DAG) that contain arachidonic acid (AA) esterified at the sn-2 position to biosynthesize 2-AG. Has negligible activity against other lipids including monoacylglycerols and phospholipids. Plays a key role in regulating 2-AG signaling in the CNS. Controls the activity of 2-AG as a retrograde messenger at neuronal synapses. Supports axonal growth during development and adult neurogenesis. Plays a role for eCB signaling in the physiological regulation of anxiety and depressive behaviors. Also regulates neuroinflammatory responses in the brain, in particular, LPS-induced microglial activation. This Rattus norvegicus (Rat) protein is Diacylglycerol lipase-alpha (Dagla).